The following is a 977-amino-acid chain: Vacuolar membrane protease (977 aa).

At 1–17 the chain is on the cytoplasmic side; that stretch reads MARSRTAGRCNPFAFYR. The chain crosses the membrane as a helical span at residues 18-38; that stretch reads VPVTVFVTLIYVALLAPIIVV. Over 39 to 383 the chain is Vacuolar; it reads HHILPAVPES…AFAVFEIHTL (345 aa). N-linked (GlcNAc...) asparagine glycosylation is found at N113 and N116. Residues H166 and D178 each coordinate Zn(2+). The Proton acceptor role is filled by E212. 3 residues coordinate Zn(2+): E213, E238, and H311. A helical transmembrane segment spans residues 384–404; that stretch reads FALSVTLLIVGPLTLFITSII. The Cytoplasmic segment spans residues 405–438; it reads LANQDRMYLFGISVPVDDGFGSVPLRGWRGFFRF. Residues 439-459 form a helical membrane-spanning segment; the sequence is PFIFGSTTASVVALAYLMAKI. Residues 460–469 lie on the Vacuolar side of the membrane; that stretch reads NPMIAHSSEY. A helical transmembrane segment spans residues 470–490; it reads AVWSMMISAWVFVAWFLSRIA. At 491–500 the chain is on the cytoplasmic side; that stretch reads NFARPSALHR. The chain crosses the membrane as a helical span at residues 501-521; the sequence is IYVLTWMFLLTWVLLVITTVY. The Vacuolar portion of the chain corresponds to 522–525; the sequence is ENRD. Residues 526–546 traverse the membrane as a helical segment; the sequence is GIASGYFVIFYAFGTFMATWI. Residues 547-659 are Cytoplasmic-facing; that stretch reads SYLELFSLPK…WSANLPKWTW (113 aa). The span at 566–576 shows a compositional bias: polar residues; the sequence is GQISSRPTSLG. The segment at 566–604 is disordered; that stretch reads GQISSRPTSLGGSRLLTPSGESVGQHPEDEEPTESTSLL. The chain crosses the membrane as a helical span at residues 660-680; the sequence is ILQFLLIAPIVIILIGQLGLL. At 681–696 the chain is on the vacuolar side; that stretch reads ITSAIHQTMQDGSSTL. The helical transmembrane segment at 697–717 threads the bilayer; it reads VPYLIIALLTTFLFMPTLPFI. Residues 718–726 are Cytoplasmic-facing; that stretch reads HRYTYHIPT. A helical transmembrane segment spans residues 727–747; that stretch reads FLFLIFVATLVYNLVAFPFSG. The Vacuolar segment spans residues 748–977; it reads NNRTKLFFLQ…LVKGSRSFEV (230 aa). 2 N-linked (GlcNAc...) asparagine glycosylation sites follow: N749 and N791.

The protein belongs to the peptidase M28 family. It depends on Zn(2+) as a cofactor.

Its subcellular location is the vacuole membrane. Functionally, may be involved in vacuolar sorting and osmoregulation. The polypeptide is Vacuolar membrane protease (Talaromyces marneffei (strain ATCC 18224 / CBS 334.59 / QM 7333) (Penicillium marneffei)).